The following is a 97-amino-acid chain: MVCVPCFIIPLLLYIWHKFVQPIILRYWNPWEKKDAQGNVIKKGPDFPFECKGGVCPFVPGAKKPEKASVGPAEESQNPPLNAIAAETEVDESKKEI.

The interval 64-97 is disordered; the sequence is KPEKASVGPAEESQNPPLNAIAAETEVDESKKEI. S69 bears the Phosphoserine mark.

Belongs to the UPF0729 family.

The sequence is that of UPF0729 protein GD16342 from Drosophila simulans (Fruit fly).